Consider the following 210-residue polypeptide: Probable molybdenum cofactor guanylyltransferase (210 aa).

GTP contacts are provided by residues 18 to 20, K31, N59, D86, and D111; that span reads LAG. D111 contacts Mg(2+).

The protein belongs to the MobA family. The cofactor is Mg(2+).

Its subcellular location is the cytoplasm. The enzyme catalyses Mo-molybdopterin + GTP + H(+) = Mo-molybdopterin guanine dinucleotide + diphosphate. In terms of biological role, transfers a GMP moiety from GTP to Mo-molybdopterin (Mo-MPT) cofactor (Moco or molybdenum cofactor) to form Mo-molybdopterin guanine dinucleotide (Mo-MGD) cofactor. The sequence is that of Probable molybdenum cofactor guanylyltransferase (nasC) from Haloferax mediterranei (strain ATCC 33500 / DSM 1411 / JCM 8866 / NBRC 14739 / NCIMB 2177 / R-4) (Halobacterium mediterranei).